The chain runs to 341 residues: Methionine import ATP-binding protein MetN 1 (341 aa).

The ABC transporter domain maps to 2 to 241 (IEFRQVSKSF…PKTTIAQNFV (240 aa)). 38–45 (GYSGAGKS) lines the ATP pocket.

This sequence belongs to the ABC transporter superfamily. Methionine importer (TC 3.A.1.24) family. The complex is composed of two ATP-binding proteins (MetN), two transmembrane proteins (MetI) and a solute-binding protein (MetQ).

Its subcellular location is the cell membrane. The enzyme catalyses L-methionine(out) + ATP + H2O = L-methionine(in) + ADP + phosphate + H(+). It catalyses the reaction D-methionine(out) + ATP + H2O = D-methionine(in) + ADP + phosphate + H(+). Part of the ABC transporter complex MetNIQ involved in methionine import. Responsible for energy coupling to the transport system. The polypeptide is Methionine import ATP-binding protein MetN 1 (Staphylococcus aureus (strain Mu50 / ATCC 700699)).